Reading from the N-terminus, the 330-residue chain is Laforin (330 aa).

A CBM20 domain is found at 1–123 (MLFRFGVVVP…DNLVDGVYCL (123 aa)). Phosphoserine; by AMPK is present on Ser-25. Substrate is bound by residues Trp-32, Lys-86, 102–106 (GPHHD), Asp-196, Asp-234, and Arg-240. The Tyrosine-protein phosphatase domain occupies 155–322 (HYSRILPNIW…QQDFSQKFGK (168 aa)). Cys-265 functions as the Phosphocysteine intermediate in the catalytic mechanism. Positions 265 to 271 (CNAGVGR) match the Glucan phosphatase signature motif CXAGXGR motif. Residues 266–271 (NAGVGR) and Tyr-303 contribute to the substrate site.

It belongs to the protein-tyrosine phosphatase family. In terms of assembly, homodimer. Interacts with PPP1R3B, PPP1R3C, HIRIP5, and EPM2AIP1. Binds glycogen and Lafora bodies. Interacts with NHLRC1/malin (via the NHL repeats). Forms a complex with NHLRC1/malin and HSP70. Interacts with PPP1R3D; in the presence of NHLC1/malin the interaction leads to ubiquitination and autophagic degradation of PPP1R3D. Interacts (via the phosphatase domain) with MAPT/Tau; the interaction dephosphorylates MAPT. Interacts with PRDM8. In terms of processing, polyubiquitinated by NHLRC1/malin. Phosphorylation on Ser-25 by AMPK affects the phosphatase activity of the enzyme and its ability to homodimerize and interact with NHLRC1, PPP1R3C or PRKAA2. Detected in skeletal muscle and in brain (at protein level). Widely expressed. Higher levels of expression are found in heart, brain, liver, skeletal muscle and kidney.

The protein localises to the cytoplasm. It localises to the endoplasmic reticulum membrane. It is found in the cell membrane. The enzyme catalyses O-phospho-L-tyrosyl-[protein] + H2O = L-tyrosyl-[protein] + phosphate. The catalysed reaction is O-phospho-L-seryl-[protein] + H2O = L-seryl-[protein] + phosphate. It catalyses the reaction O-phospho-L-threonyl-[protein] + H2O = L-threonyl-[protein] + phosphate. In terms of biological role, plays an important role in preventing glycogen hyperphosphorylation and the formation of insoluble aggregates, via its activity as glycogen phosphatase, and by promoting the ubiquitination of proteins involved in glycogen metabolism via its interaction with the E3 ubiquitin ligase NHLRC1/malin. Dephosphorylates phosphotyrosine and synthetic substrates, such as para-nitrophenylphosphate (pNPP), and has low activity with phosphoserine and phosphothreonine substrates (in vitro). Has also been shown to dephosphorylate MAPT. Shows strong phosphatase activity towards complex carbohydrates in vitro, avoiding glycogen hyperphosphorylation which is associated with reduced branching and formation of insoluble aggregates. Forms a complex with NHLRC1/malin and HSP70, which suppresses the cellular toxicity of misfolded proteins by promoting their degradation through the ubiquitin-proteasome system (UPS). Acts as a scaffold protein to facilitate PPP1R3C/PTG ubiquitination by NHLRC1/malin. Also promotes proteasome-independent protein degradation through the macroautophagy pathway. The protein is Laforin (Epm2a) of Mus musculus (Mouse).